Here is a 74-residue protein sequence, read N- to C-terminus: Peptide ToAP4 (74 aa).

The N-terminal stretch at 1–22 (MQIKHLITLFFLVLIVADQCSA) is a signal peptide. Lysine 39 carries the post-translational modification Lysine amide. Residues 40 to 74 (GGRRKREIAAQIEQYRDLQKREAELEELLDRLPMF) constitute a propeptide that is removed on maturation.

It belongs to the non-disulfide-bridged peptide (NDBP) superfamily. Short antimicrobial peptide (group 4) family. As to expression, expressed by the venom gland.

The protein localises to the secreted. In terms of biological role, shows anti-inflammatory activities, since it decreases release of pro-inflammatory cytokines, and increases release of anti-inflammatory cytokines. Acts by blocking the Toll-like receptor 4 (TLR4). Also increases MHC-II expression in LPS-stimulated cells. Does not show antibacterial activity on Mycobacterium abscessus subsp. massiliense. Does not show antifungal activity. Has low hemolytic activity on human erythrocyte and low monocyte cytotoxicity. In vivo, does not induce immune cell migration. Helical wheel projections predict an amphipathic peptide with distinct hydrophobic and hydrophilic faces. This chain is Peptide ToAP4, found in Tityus obscurus (Amazonian scorpion).